Here is a 207-residue protein sequence, read N- to C-terminus: Sodium/potassium-transporting ATPase subunit beta-1-interacting protein 1 (207 aa).

3 helical membrane passes run 2 to 22 (GKCS…VAAL), 35 to 55 (APIL…FGTV), and 62 to 82 (LILY…IICF). Residue N100 is glycosylated (N-linked (GlcNAc...) asparagine). The chain crosses the membrane as a helical span at residues 147–167 (ALSSALQIFLALFGFVFACYV).

This sequence belongs to the NKAIN family. As to quaternary structure, interacts with ATP1B1 C-terminus. As to expression, detected in the brain only and specifically in neurons. Expressed in multiple regions such as cerebral cortex, thalamus, hippocampus, olfactory bulb and brainstem as well as in cerebellum with high expression in granular cell layer.

Its subcellular location is the cell membrane. In Mus musculus (Mouse), this protein is Sodium/potassium-transporting ATPase subunit beta-1-interacting protein 1 (Nkain1).